Here is a 299-residue protein sequence, read N- to C-terminus: ATP phosphoribosyltransferase (299 aa).

This sequence belongs to the ATP phosphoribosyltransferase family. Long subfamily. Equilibrium between an active dimeric form, an inactive hexameric form and higher aggregates. Interconversion between the various forms is largely reversible and is influenced by the natural substrates and inhibitors of the enzyme. The cofactor is Mg(2+).

The protein resides in the cytoplasm. It carries out the reaction 1-(5-phospho-beta-D-ribosyl)-ATP + diphosphate = 5-phospho-alpha-D-ribose 1-diphosphate + ATP. It functions in the pathway amino-acid biosynthesis; L-histidine biosynthesis; L-histidine from 5-phospho-alpha-D-ribose 1-diphosphate: step 1/9. Feedback inhibited by histidine. Catalyzes the condensation of ATP and 5-phosphoribose 1-diphosphate to form N'-(5'-phosphoribosyl)-ATP (PR-ATP). Has a crucial role in the pathway because the rate of histidine biosynthesis seems to be controlled primarily by regulation of HisG enzymatic activity. The sequence is that of ATP phosphoribosyltransferase from Shigella dysenteriae serotype 1 (strain Sd197).